The chain runs to 120 residues: Large ribosomal subunit protein uL18 (120 aa).

It belongs to the universal ribosomal protein uL18 family. Part of the 50S ribosomal subunit; part of the 5S rRNA/L5/L18/L25 subcomplex. Contacts the 5S and 23S rRNAs.

In terms of biological role, this is one of the proteins that bind and probably mediate the attachment of the 5S RNA into the large ribosomal subunit, where it forms part of the central protuberance. This is Large ribosomal subunit protein uL18 from Methylobacterium sp. (strain 4-46).